Reading from the N-terminus, the 357-residue chain is Magnesium-chelatase subunit ChlI (357 aa).

47-54 is a binding site for ATP; that stretch reads GDRGTGKS.

The protein belongs to the Mg-chelatase subunits D/I family.

It catalyses the reaction protoporphyrin IX + Mg(2+) + ATP + H2O = Mg-protoporphyrin IX + ADP + phosphate + 3 H(+). Its pathway is porphyrin-containing compound metabolism; chlorophyll biosynthesis. Its function is as follows. Involved in chlorophyll biosynthesis; introduces a magnesium ion into protoporphyrin IX to yield Mg-protoporphyrin IX. This is Magnesium-chelatase subunit ChlI (chlI) from Synechocystis sp. (strain ATCC 27184 / PCC 6803 / Kazusa).